The primary structure comprises 180 residues: Translation initiation factor IF-3 (180 aa).

It belongs to the IF-3 family. In terms of assembly, monomer.

The protein resides in the cytoplasm. Functionally, IF-3 binds to the 30S ribosomal subunit and shifts the equilibrium between 70S ribosomes and their 50S and 30S subunits in favor of the free subunits, thus enhancing the availability of 30S subunits on which protein synthesis initiation begins. The sequence is that of Translation initiation factor IF-3 from Pectobacterium atrosepticum (strain SCRI 1043 / ATCC BAA-672) (Erwinia carotovora subsp. atroseptica).